Consider the following 304-residue polypeptide: Putative HTH-type transcriptional regulatory protein Memar_2347 (304 aa).

An HTH cro/C1-type domain is found at Leu132–Leu189. The H-T-H motif DNA-binding region spans Leu143 to Ser162.

The chain is Putative HTH-type transcriptional regulatory protein Memar_2347 from Methanoculleus marisnigri (strain ATCC 35101 / DSM 1498 / JR1).